The primary structure comprises 181 residues: Adenine phosphoribosyltransferase (181 aa).

This sequence belongs to the purine/pyrimidine phosphoribosyltransferase family. Homodimer.

The protein resides in the cytoplasm. The catalysed reaction is AMP + diphosphate = 5-phospho-alpha-D-ribose 1-diphosphate + adenine. It participates in purine metabolism; AMP biosynthesis via salvage pathway; AMP from adenine: step 1/1. Its function is as follows. Catalyzes a salvage reaction resulting in the formation of AMP, that is energically less costly than de novo synthesis. This Shewanella woodyi (strain ATCC 51908 / MS32) protein is Adenine phosphoribosyltransferase.